The primary structure comprises 734 residues: Probable inactive histone-lysine N-methyltransferase SUVR1 (734 aa).

The tract at residues 61–163 (QSTEKNKKEE…LPPLKRYVRR (103 aa)) is disordered. Residues 62-81 (STEKNKKEEEKKKKEEEKKS) show a composition bias toward basic and acidic residues. Over residues 98–109 (VQDEEDDMDEDE) the composition is skewed to acidic residues. A compositionally biased stretch (basic residues) spans 113–122 (KRRLRSRRGR). The span at 123-132 (ASSSSSSSSS) shows a compositional bias: low complexity. Zn(2+) contacts are provided by Cys-460, Cys-464, Cys-468, Cys-477, Cys-545, Cys-549, Cys-551, and Cys-555. The Pre-SET domain maps to 460–563 (CSTSCIEDCL…RCGNRVVQRG (104 aa)). Positions 566–696 (NKLQVFFTPN…AMEELAWDYG (131 aa)) constitute an SET domain. S-adenosyl-L-methionine-binding positions include 577–579 (KGW) and 652–653 (NH). Residue Cys-655 participates in Zn(2+) binding. S-adenosyl-L-methionine is bound at residue Tyr-695. Positions 707–723 (KPFDCLCGSRFCRNKKR) constitute a Post-SET domain. Zn(2+) contacts are provided by Cys-711, Cys-713, and Cys-718.

This sequence belongs to the class V-like SAM-binding methyltransferase superfamily. Histone-lysine methyltransferase family. As to quaternary structure, interacts with SUVR2 and itself.

The protein localises to the nucleus. It is found in the chromosome. Its function is as follows. Probable inactive histone-lysine methyltransferase that acts as regulator of transctiptional gene silencing independently of histone H3K9 methylation. Contributes to transcriptional gene silencing at RNA-directed DNA methylation (RdDM) target loci but also at RdDM-independent target loci. This is Probable inactive histone-lysine N-methyltransferase SUVR1 (SUVR1) from Arabidopsis thaliana (Mouse-ear cress).